We begin with the raw amino-acid sequence, 235 residues long: Peptidyl-tRNA hydrolase (235 aa).

Tyr14 serves as a coordination point for tRNA. Residue His19 is the Proton acceptor of the active site. The tRNA site is built by Phe64, Asn66, and Asn112. The segment at 186 to 235 is disordered; the sequence is RTAPPRSSGGSPKTDKPAKATREPPPAAKPEATPEEETRSPLQRLVDKFR. The segment covering 198–207 has biased composition (basic and acidic residues); the sequence is KTDKPAKATR.

It belongs to the PTH family. As to quaternary structure, monomer.

The protein localises to the cytoplasm. It carries out the reaction an N-acyl-L-alpha-aminoacyl-tRNA + H2O = an N-acyl-L-amino acid + a tRNA + H(+). In terms of biological role, hydrolyzes ribosome-free peptidyl-tRNAs (with 1 or more amino acids incorporated), which drop off the ribosome during protein synthesis, or as a result of ribosome stalling. Its function is as follows. Catalyzes the release of premature peptidyl moieties from peptidyl-tRNA molecules trapped in stalled 50S ribosomal subunits, and thus maintains levels of free tRNAs and 50S ribosomes. The chain is Peptidyl-tRNA hydrolase from Dinoroseobacter shibae (strain DSM 16493 / NCIMB 14021 / DFL 12).